The following is a 206-amino-acid chain: Platelet glycoprotein Ib beta chain (206 aa).

Positions Met1–Cys26 are cleaved as a signal peptide. 2 cysteine pairs are disulfide-bonded: Cys26-Cys32 and Cys30-Cys39. The LRRNT domain maps to Pro27–Pro55. Topologically, residues Pro27–Cys147 are extracellular. One copy of the LRR repeat lies at Leu60–Ala83. Asn66 carries an N-linked (GlcNAc...) asparagine glycan. One can recognise an LRRCT domain in the interval Asn89–Pro143. 2 cysteine pairs are disulfide-bonded: Cys93/Cys118 and Cys95/Cys141. Residues Trp148–Leu172 form a helical membrane-spanning segment. The Cytoplasmic portion of the chain corresponds to Gly173–Ser206. A phosphoserine mark is found at Ser186 and Ser191. Thr193 carries the post-translational modification Phosphothreonine. Residue Ser200 is modified to Phosphoserine.

Two GP-Ib beta are disulfide-linked to one GP-Ib alpha. GP-IX is complexed with the GP-Ib heterodimer via a non covalent linkage. Interacts with TRAF4.

The protein resides in the membrane. Gp-Ib, a surface membrane protein of platelets, participates in the formation of platelet plugs by binding to von Willebrand factor, which is already bound to the subendothelium. In Mus musculus (Mouse), this protein is Platelet glycoprotein Ib beta chain (Gp1bb).